A 390-amino-acid chain; its full sequence is Trehalose-phosphate phosphatase (390 aa).

Asp150 acts as the Nucleophile in catalysis. Mg(2+) contacts are provided by Asp150, Asp152, and Asp333. Residue 150 to 152 (DFD) participates in substrate binding.

The protein belongs to the trehalose phosphatase family. Mg(2+) is required as a cofactor.

The enzyme catalyses alpha,alpha-trehalose 6-phosphate + H2O = alpha,alpha-trehalose + phosphate. Its pathway is glycan biosynthesis; trehalose biosynthesis. Removes the phosphate from trehalose 6-phosphate to produce free trehalose. This Mycobacterium ulcerans (strain Agy99) protein is Trehalose-phosphate phosphatase (otsB).